A 488-amino-acid chain; its full sequence is Aspartyl/glutamyl-tRNA(Asn/Gln) amidotransferase subunit B (488 aa).

Belongs to the GatB/GatE family. GatB subfamily. In terms of assembly, heterotrimer of A, B and C subunits.

The enzyme catalyses L-glutamyl-tRNA(Gln) + L-glutamine + ATP + H2O = L-glutaminyl-tRNA(Gln) + L-glutamate + ADP + phosphate + H(+). The catalysed reaction is L-aspartyl-tRNA(Asn) + L-glutamine + ATP + H2O = L-asparaginyl-tRNA(Asn) + L-glutamate + ADP + phosphate + 2 H(+). Allows the formation of correctly charged Asn-tRNA(Asn) or Gln-tRNA(Gln) through the transamidation of misacylated Asp-tRNA(Asn) or Glu-tRNA(Gln) in organisms which lack either or both of asparaginyl-tRNA or glutaminyl-tRNA synthetases. The reaction takes place in the presence of glutamine and ATP through an activated phospho-Asp-tRNA(Asn) or phospho-Glu-tRNA(Gln). This Chlamydia trachomatis serovar L2 (strain ATCC VR-902B / DSM 19102 / 434/Bu) protein is Aspartyl/glutamyl-tRNA(Asn/Gln) amidotransferase subunit B.